We begin with the raw amino-acid sequence, 118 residues long: uncharacterized protein (118 aa).

Residues 1–27 (MPIKEPDVWALIWSWLQTNLSSSSAQS) form the signal peptide.

This is an uncharacterized protein from Haemophilus influenzae (strain ATCC 51907 / DSM 11121 / KW20 / Rd).